Here is a 278-residue protein sequence, read N- to C-terminus: Large ribosomal subunit protein uL2 (278 aa).

The disordered stretch occupies residues histidine 201 to lysine 278. Residues glycine 210–valine 221 are compositionally biased toward basic residues.

The protein belongs to the universal ribosomal protein uL2 family. Part of the 50S ribosomal subunit. Forms a bridge to the 30S subunit in the 70S ribosome.

One of the primary rRNA binding proteins. Required for association of the 30S and 50S subunits to form the 70S ribosome, for tRNA binding and peptide bond formation. It has been suggested to have peptidyltransferase activity; this is somewhat controversial. Makes several contacts with the 16S rRNA in the 70S ribosome. This chain is Large ribosomal subunit protein uL2, found in Rhizobium rhizogenes (strain K84 / ATCC BAA-868) (Agrobacterium radiobacter).